Consider the following 207-residue polypeptide: Glutathione S-transferase 4 (207 aa).

The region spanning P2–G79 is the GST N-terminal domain. Glutathione is bound by residues Y8, W39, K43, G49–L51, and Q63–S64. The region spanning T81 to V207 is the GST C-terminal domain.

It belongs to the GST superfamily. Sigma family.

It carries out the reaction RX + glutathione = an S-substituted glutathione + a halide anion + H(+). Its function is as follows. Conjugation of reduced glutathione to a wide number of exogenous and endogenous hydrophobic electrophiles. May play a role in the detoxification of reactive oxygen species produced during pathogenic bacterial infection. This Caenorhabditis elegans protein is Glutathione S-transferase 4.